A 240-amino-acid chain; its full sequence is uncharacterized protein (240 aa).

The N-terminal stretch at 1–30 (MNKSGMSLIITMLLLIGTAIVIGAAYYAWS) is a signal peptide.

This is an uncharacterized protein from Methanocaldococcus jannaschii (strain ATCC 43067 / DSM 2661 / JAL-1 / JCM 10045 / NBRC 100440) (Methanococcus jannaschii).